Reading from the N-terminus, the 307-residue chain is Ribonuclease HIII (307 aa).

The 215-residue stretch at Met93–Leu307 folds into the RNase H type-2 domain. Residues Asp99, Glu100, and Asp204 each coordinate a divalent metal cation.

Belongs to the RNase HII family. RnhC subfamily. The cofactor is Mn(2+). It depends on Mg(2+) as a cofactor.

The protein localises to the cytoplasm. The enzyme catalyses Endonucleolytic cleavage to 5'-phosphomonoester.. Functionally, endonuclease that specifically degrades the RNA of RNA-DNA hybrids. In Bacillus pumilus (strain SAFR-032), this protein is Ribonuclease HIII.